A 288-amino-acid chain; its full sequence is Phytanoyl-CoA dioxygenase domain-containing protein 1 homolog (288 aa).

Residues K95, M134, 149–151 (HVD), and W167 contribute to the 2-oxoglutarate site. Fe cation is bound by residues H149 and D151. H242 contacts Fe cation. Positions 244 and 253 each coordinate 2-oxoglutarate.

Belongs to the PhyH family. PHYHD1 subfamily. Fe cation is required as a cofactor.

Has alpha-ketoglutarate-dependent dioxygenase activity. Does not show detectable activity towards fatty acid CoA thioesters. Is not expected to be active with phytanoyl CoA. This is Phytanoyl-CoA dioxygenase domain-containing protein 1 homolog from Caenorhabditis briggsae.